The following is a 178-amino-acid chain: Nicotinamide-nucleotide adenylyltransferase (178 aa).

This sequence belongs to the archaeal NMN adenylyltransferase family. In terms of assembly, homohexamer.

The protein resides in the cytoplasm. The enzyme catalyses beta-nicotinamide D-ribonucleotide + ATP + H(+) = diphosphate + NAD(+). The protein operates within cofactor biosynthesis; NAD(+) biosynthesis; NAD(+) from nicotinamide D-ribonucleotide: step 1/1. This is Nicotinamide-nucleotide adenylyltransferase from Methanothermobacter thermautotrophicus (strain ATCC 29096 / DSM 1053 / JCM 10044 / NBRC 100330 / Delta H) (Methanobacterium thermoautotrophicum).